Consider the following 363-residue polypeptide: 3-dehydroquinate synthase (363 aa).

Residues 75–80 (DAEEGK), 109–113 (GAVTD), 133–134 (TS), Lys146, Lys155, and 173–176 (TLST) contribute to the NAD(+) site. Residues Glu188, His251, and His267 each coordinate Zn(2+).

The protein belongs to the sugar phosphate cyclases superfamily. Dehydroquinate synthase family. The cofactor is Co(2+). It depends on Zn(2+) as a cofactor. Requires NAD(+) as cofactor.

It localises to the cytoplasm. It catalyses the reaction 7-phospho-2-dehydro-3-deoxy-D-arabino-heptonate = 3-dehydroquinate + phosphate. It participates in metabolic intermediate biosynthesis; chorismate biosynthesis; chorismate from D-erythrose 4-phosphate and phosphoenolpyruvate: step 2/7. Catalyzes the conversion of 3-deoxy-D-arabino-heptulosonate 7-phosphate (DAHP) to dehydroquinate (DHQ). This chain is 3-dehydroquinate synthase, found in Arthrobacter sp. (strain FB24).